Here is a 200-residue protein sequence, read N- to C-terminus: Probable molybdenum cofactor guanylyltransferase (200 aa).

GTP is bound by residues 9–11 (LAG), Lys-21, Asp-69, and Asp-100. Asp-100 is a Mg(2+) binding site.

It belongs to the MobA family. It depends on Mg(2+) as a cofactor.

It localises to the cytoplasm. The enzyme catalyses Mo-molybdopterin + GTP + H(+) = Mo-molybdopterin guanine dinucleotide + diphosphate. In terms of biological role, transfers a GMP moiety from GTP to Mo-molybdopterin (Mo-MPT) cofactor (Moco or molybdenum cofactor) to form Mo-molybdopterin guanine dinucleotide (Mo-MGD) cofactor. The polypeptide is Probable molybdenum cofactor guanylyltransferase (Bacillus cereus (strain G9842)).